The following is a 301-amino-acid chain: Uricase-2 isozyme 2 (301 aa).

Residues Lys-17 and Thr-63 each act as charge relay system in the active site. Thr-63, Asp-64, Phe-165, Arg-182, Val-237, Gln-238, and Asn-257 together coordinate urate. Residue His-259 is the Charge relay system of the active site. Residues 299-301 (SKL) carry the Microbody targeting signal motif.

The protein belongs to the uricase family.

It localises to the peroxisome. It carries out the reaction urate + O2 + H2O = 5-hydroxyisourate + H2O2. It participates in purine metabolism; urate degradation; (S)-allantoin from urate: step 1/3. Catalyzes the oxidation of uric acid to 5-hydroxyisourate, which is further processed to form (S)-allantoin. The chain is Uricase-2 isozyme 2 from Canavalia lineata (Beach bean).